The following is a 275-amino-acid chain: Putative carbamate hydrolase RutD (275 aa).

The protein belongs to the AB hydrolase superfamily. Hydrolase RutD family.

It carries out the reaction carbamate + 2 H(+) = NH4(+) + CO2. Its function is as follows. Involved in pyrimidine catabolism. May facilitate the hydrolysis of carbamate, a reaction that can also occur spontaneously. This is Putative carbamate hydrolase RutD from Escherichia coli (strain UTI89 / UPEC).